Here is a 243-residue protein sequence, read N- to C-terminus: Phosphate-specific transport system accessory protein PhoU (243 aa).

Belongs to the PhoU family. In terms of assembly, homodimer. Interacts with phosphate regulon transcriptional regulatory protein PhoB and ferric uptake regulation protein Fur.

It localises to the cytoplasm. Functionally, part of the phosphate (Pho) regulon, which plays a key role in phosphate homeostasis. Encoded together with proteins of the phosphate-specific transport (Pst) system in the polycistronic pstSCAB-phoU operon. PhoU is essential for the repression of the Pho regulon at high phosphate conditions. In this role, it may bind, possibly as a chaperone, to PhoR, PhoB or a PhoR-PhoB complex to promote dephosphorylation of phospho-PhoB, or inhibit formation of the PhoR-PhoB transitory complex. The chain is Phosphate-specific transport system accessory protein PhoU from Edwardsiella tarda.